A 439-amino-acid polypeptide reads, in one-letter code: Ribosomal protein uS12 methylthiotransferase RimO (439 aa).

Residues 7–119 enclose the MTTase N-terminal domain; sequence KQLCLISLGC…IDILIAKKQN (113 aa). 6 residues coordinate [4Fe-4S] cluster: C16, C50, C82, C151, C155, and C158. In terms of domain architecture, Radical SAM core spans 137–368; sequence TGSSVHAYVK…ALKHQNHSFK (232 aa).

Belongs to the methylthiotransferase family. RimO subfamily. Requires [4Fe-4S] cluster as cofactor.

Its subcellular location is the cytoplasm. It carries out the reaction L-aspartate(89)-[ribosomal protein uS12]-hydrogen + (sulfur carrier)-SH + AH2 + 2 S-adenosyl-L-methionine = 3-methylsulfanyl-L-aspartate(89)-[ribosomal protein uS12]-hydrogen + (sulfur carrier)-H + 5'-deoxyadenosine + L-methionine + A + S-adenosyl-L-homocysteine + 2 H(+). Catalyzes the methylthiolation of an aspartic acid residue of ribosomal protein uS12. The protein is Ribosomal protein uS12 methylthiotransferase RimO of Helicobacter pylori (strain HPAG1).